The sequence spans 495 residues: Major facilitator-type transporter hxnP (495 aa).

Positions 1–24 (MGATATDIEKVPSAGTPDEPKAGE) are disordered. The next 5 helical transmembrane spans lie at 36–55 (SFVR…MYFF), 84–104 (LLIL…NLLI), 123–143 (VWGI…LLAI), 145–165 (IILG…FTLF), and 177–197 (VLQS…FGLF). Asn-200 is a glycosylation site (N-linked (GlcNAc...) asparagine). Helical transmembrane passes span 209–229 (WLFI…FWWL), 282–302 (VITF…PIIV), 314–334 (LWTV…AKSS), 341–361 (SLHI…LASI), and 368–388 (GVSY…TCLV). The N-linked (GlcNAc...) asparagine glycan is linked to Asn-395. A run of 2 helical transmembrane segments spans residues 404 to 424 (ANTG…AATF) and 436 to 456 (LVAT…MGTW).

Belongs to the major facilitator superfamily.

It is found in the cell membrane. Major facilitator-type transporter, part of the hnx cluster involved in the purine degradation. The nicotinate hydroxylase hnxS accepts nicotinate as a substrate and catalyzes the first step of nicotinate catabolism. The major facilitator-type transporters hxnP and hxnZ are probably involved in the uptake of nicotinate-derived metabolites, and the oxidoreductases hxnT and hxnY in the further metabolism of 6-OH nicotinic acid. This Emericella nidulans (strain FGSC A4 / ATCC 38163 / CBS 112.46 / NRRL 194 / M139) (Aspergillus nidulans) protein is Major facilitator-type transporter hxnP.